The primary structure comprises 241 residues: Small ribosomal subunit protein uS3 (241 aa).

One can recognise a KH type-2 domain in the interval 22 to 91 (VDEYLAYKFH…NPQVTVVKVE (70 aa)). Positions 218-241 (EMQQTQPEAPTLEETVEQSGGETQ) are disordered.

The protein belongs to the universal ribosomal protein uS3 family. In terms of assembly, part of the 30S ribosomal subunit.

Binds the lower part of the 30S subunit head. In Ignicoccus hospitalis (strain KIN4/I / DSM 18386 / JCM 14125), this protein is Small ribosomal subunit protein uS3.